The following is a 180-amino-acid chain: Inner membrane-spanning protein YciB (180 aa).

5 helical membrane-spanning segments follow: residues 22-42 (IFVASGALIVATLLALAFTWF), 50-70 (MTLVTAIMVLVFGTLTLAFHS), 72-92 (LFIKWKVTVLYVLFAVALLVS), 121-141 (MSWAVFFLVCGLLNIYVAFWL), and 149-169 (FKVFGLTALTLVFTLISGVYI).

Belongs to the YciB family.

Its subcellular location is the cell inner membrane. Functionally, plays a role in cell envelope biogenesis, maintenance of cell envelope integrity and membrane homeostasis. The chain is Inner membrane-spanning protein YciB from Yersinia enterocolitica serotype O:8 / biotype 1B (strain NCTC 13174 / 8081).